We begin with the raw amino-acid sequence, 120 residues long: Ribosome-binding factor A (120 aa).

It belongs to the RbfA family. In terms of assembly, monomer. Binds 30S ribosomal subunits, but not 50S ribosomal subunits or 70S ribosomes.

It localises to the cytoplasm. In terms of biological role, one of several proteins that assist in the late maturation steps of the functional core of the 30S ribosomal subunit. Associates with free 30S ribosomal subunits (but not with 30S subunits that are part of 70S ribosomes or polysomes). Required for efficient processing of 16S rRNA. May interact with the 5'-terminal helix region of 16S rRNA. In Buchnera aphidicola subsp. Acyrthosiphon pisum (strain 5A), this protein is Ribosome-binding factor A.